We begin with the raw amino-acid sequence, 395 residues long: Ribosomal RNA small subunit methyltransferase H (395 aa).

S-adenosyl-L-methionine contacts are provided by residues 101-103, aspartate 120, tyrosine 147, aspartate 171, and glutamine 178; that span reads GGH.

Belongs to the methyltransferase superfamily. RsmH family.

The protein resides in the cytoplasm. The catalysed reaction is cytidine(1402) in 16S rRNA + S-adenosyl-L-methionine = N(4)-methylcytidine(1402) in 16S rRNA + S-adenosyl-L-homocysteine + H(+). Specifically methylates the N4 position of cytidine in position 1402 (C1402) of 16S rRNA. The protein is Ribosomal RNA small subunit methyltransferase H of Mycobacterium ulcerans (strain Agy99).